Here is a 639-residue protein sequence, read N- to C-terminus: Protein argonaute (639 aa).

The segment at 1-100 (MYLNLYKIDI…YIKKLFLDND (100 aa)) is N-terminal domain. The tract at residues 101–153 (FYFKKGNNFISNSEVFSLDSNENVNAHLTYKIKIHNISNEYYLSILPKFTFLS) is linker L1. The tract at residues 154 to 209 (KEPALESAIKSGYLYNIKSGKSFPYISGLDGILKIDIGNNQIVEVAYPENYLFNFT) is PAZ domain. The interval 210-292 (TRDAEKYGFS…KYSFYKNEQP (83 aa)) is linker L2. A mid domain region spans residues 293–424 (LKAIFFFSSK…YVYKMGNFIP (132 aa)). Positions 425–639 (ECKPFILKKM…DYEWKLYIPY (215 aa)) are PIWI domain. Catalysis depends on residues aspartate 446, glutamate 482, aspartate 516, and asparagine 624. Aspartate 446 is a Mn(2+) binding site. Mn(2+) contacts are provided by aspartate 516 and asparagine 624.

This sequence belongs to the argonaute family. Long pAgo subfamily. Requires Mn(2+) as cofactor.

It is found in the cytoplasm. An RNA-guided ssDNA endonuclease that may play a role in defense against invading mobile genetic elements. Uses short 5'-OH-ssRNA sequences as guides (gRNA) to bind complementary target DNA (tDNA) or target RNA resulting in target cleavage. The cleavage site is 10 nucleotides (nt) downstream of the target residue base-paired with the 5'-end of the gRNA. Reaction rates are fastest on 5'-OH-gRNA:tDNA followed by 5'-OH-gRNA:target RNA. gRNA between 17-21 nt supports equivalent rates of cleavage, has no preferred 5'-nt. Has weak activity on tDNA with 5'-phospho-gRNA, yielding products 1-2 nt longer. Unlike other characterized prokaryotic Ago proteins symmetric mismatches centered around the cleavage site reduce cleavage efficiency. This is Protein argonaute from Marinitoga piezophila (strain DSM 14283 / JCM 11233 / KA3).